A 225-amino-acid polypeptide reads, in one-letter code: Peptidyl-tRNA hydrolase (225 aa).

Residue Tyr14 coordinates tRNA. Residue His19 is the Proton acceptor of the active site. TRNA-binding residues include Phe64, Asn66, and Asn112. The segment at 184 to 225 (ALRMQPPKPEKPKPAAKAPEAQAPEAAPDERSALQKLADRFR) is disordered. A compositionally biased stretch (low complexity) spans 198 to 209 (AAKAPEAQAPEA). A compositionally biased stretch (basic and acidic residues) spans 211–225 (PDERSALQKLADRFR).

The protein belongs to the PTH family. As to quaternary structure, monomer.

Its subcellular location is the cytoplasm. The enzyme catalyses an N-acyl-L-alpha-aminoacyl-tRNA + H2O = an N-acyl-L-amino acid + a tRNA + H(+). In terms of biological role, hydrolyzes ribosome-free peptidyl-tRNAs (with 1 or more amino acids incorporated), which drop off the ribosome during protein synthesis, or as a result of ribosome stalling. Functionally, catalyzes the release of premature peptidyl moieties from peptidyl-tRNA molecules trapped in stalled 50S ribosomal subunits, and thus maintains levels of free tRNAs and 50S ribosomes. The sequence is that of Peptidyl-tRNA hydrolase from Cereibacter sphaeroides (strain ATCC 17023 / DSM 158 / JCM 6121 / CCUG 31486 / LMG 2827 / NBRC 12203 / NCIMB 8253 / ATH 2.4.1.) (Rhodobacter sphaeroides).